A 57-amino-acid chain; its full sequence is Large ribosomal subunit protein bL32 (57 aa).

The span at 1-20 (MAVPKKKTSKTKRDQRKANW) shows a compositional bias: basic residues. Residues 1–21 (MAVPKKKTSKTKRDQRKANWK) form a disordered region.

Belongs to the bacterial ribosomal protein bL32 family.

This Rippkaea orientalis (strain PCC 8801 / RF-1) (Cyanothece sp. (strain PCC 8801)) protein is Large ribosomal subunit protein bL32.